The chain runs to 152 residues: Nucleoside diphosphate kinase A 2 (152 aa).

ATP is bound by residues lysine 12, phenylalanine 60, arginine 88, threonine 94, arginine 105, and asparagine 115. Histidine 118 (pros-phosphohistidine intermediate) is an active-site residue.

It belongs to the NDK family. As to quaternary structure, homohexamer. The cofactor is Mg(2+). The N-terminus is blocked.

The protein localises to the cytoplasm. It is found in the cell membrane. Its subcellular location is the nucleus. The catalysed reaction is a 2'-deoxyribonucleoside 5'-diphosphate + ATP = a 2'-deoxyribonucleoside 5'-triphosphate + ADP. It carries out the reaction a ribonucleoside 5'-diphosphate + ATP = a ribonucleoside 5'-triphosphate + ADP. Autophosphorylation at His-118 increases serine/threonine protein kinase activity of the enzyme. Interaction with the SET complex inhibits exonuclease activity. Major role in the synthesis of nucleoside triphosphates other than ATP. Possesses nucleoside-diphosphate kinase, serine/threonine-specific protein kinase, geranyl and farnesyl pyrophosphate kinase, histidine protein kinase and 3'-5' exonuclease activities. Involved in cell proliferation, differentiation and development, signal transduction, G protein-coupled receptor endocytosis, and gene expression. Required for neural development including neural patterning and cell fate determination. This is Nucleoside diphosphate kinase A 2 (NME1-2) from Bos taurus (Bovine).